The chain runs to 65 residues: KEGYPMGRDGCKISCVINNSFCKVECQAKWRQSDGYCYFWGLSCYCTNLPEDAQVWDSSTNKCGG.

Residues 1–64 form the LCN-type CS-alpha/beta domain; it reads KEGYPMGRDG…VWDSSTNKCG (64 aa). 4 disulfides stabilise this stretch: C11/C63, C15/C37, C22/C44, and C26/C46.

Belongs to the long (4 C-C) scorpion toxin superfamily. Sodium channel inhibitor family. Beta subfamily. In terms of tissue distribution, expressed by the venom gland.

The protein resides in the secreted. In terms of biological role, beta toxins bind voltage-independently at site-4 of sodium channels (Nav) and shift the voltage of activation toward more negative potentials thereby affecting sodium channel activation and promoting spontaneous and repetitive firing. The protein is Putative beta-neurotoxin RjAa8 of Rhopalurus junceus (Caribbean blue scorpion).